The chain runs to 239 residues: Pyridoxine 5'-phosphate synthase (239 aa).

N7 serves as a coordination point for 3-amino-2-oxopropyl phosphate. D9–H10 contacts 1-deoxy-D-xylulose 5-phosphate. R18 contributes to the 3-amino-2-oxopropyl phosphate binding site. H43 functions as the Proton acceptor in the catalytic mechanism. 1-deoxy-D-xylulose 5-phosphate contacts are provided by R45 and H50. E70 serves as the catalytic Proton acceptor. Residue T100 coordinates 1-deoxy-D-xylulose 5-phosphate. H191 (proton donor) is an active-site residue. 3-amino-2-oxopropyl phosphate is bound by residues G192 and G213–H214.

It belongs to the PNP synthase family. As to quaternary structure, homooctamer; tetramer of dimers.

The protein localises to the cytoplasm. The catalysed reaction is 3-amino-2-oxopropyl phosphate + 1-deoxy-D-xylulose 5-phosphate = pyridoxine 5'-phosphate + phosphate + 2 H2O + H(+). The protein operates within cofactor biosynthesis; pyridoxine 5'-phosphate biosynthesis; pyridoxine 5'-phosphate from D-erythrose 4-phosphate: step 5/5. Catalyzes the complicated ring closure reaction between the two acyclic compounds 1-deoxy-D-xylulose-5-phosphate (DXP) and 3-amino-2-oxopropyl phosphate (1-amino-acetone-3-phosphate or AAP) to form pyridoxine 5'-phosphate (PNP) and inorganic phosphate. This chain is Pyridoxine 5'-phosphate synthase, found in Syntrophotalea carbinolica (strain DSM 2380 / NBRC 103641 / GraBd1) (Pelobacter carbinolicus).